A 270-amino-acid polypeptide reads, in one-letter code: Putative phosphoenolpyruvate synthase regulatory protein (270 aa).

ADP is bound at residue 150–157 (GVSRCGKT).

It belongs to the pyruvate, phosphate/water dikinase regulatory protein family. PSRP subfamily.

It carries out the reaction [pyruvate, water dikinase] + ADP = [pyruvate, water dikinase]-phosphate + AMP + H(+). The enzyme catalyses [pyruvate, water dikinase]-phosphate + phosphate + H(+) = [pyruvate, water dikinase] + diphosphate. Its function is as follows. Bifunctional serine/threonine kinase and phosphorylase involved in the regulation of the phosphoenolpyruvate synthase (PEPS) by catalyzing its phosphorylation/dephosphorylation. This is Putative phosphoenolpyruvate synthase regulatory protein from Shewanella frigidimarina (strain NCIMB 400).